Here is a 919-residue protein sequence, read N- to C-terminus: MATPSMMPQWSYMHIAGQDASEYLSPGLVQFARATDTYFTLGNKFRNPTVAPTHDVTTDRSQRLTLRFVPVDREDTTYSYKARFTLAVGDNRVLDMASSYFDIRGVLDRGPSFKPYSGTAYNSLAPKGAPNASQWSDNAKLNTFAQAPYLSDTITAADGIKVGTDTAQAGAAVYANKTYQPEPQVGPSEWNTSIENVKAGGRALKQTTAMQPCYGSYARPTNEHGGQSKDDNIELKFFDSANNAANTAQVVFYTEDVNLEMPDTHLVFKPTVTNGTIASESLLGQQAAPNRANYIAFRDNFIGLMYYNSTGNMGVLAGQASQLNAVVDLQDRNTELSYQLMLDALGDRTRYFSLWNSAVDSYDPDVRVIENHGVEDELPNYCFPLSAVGEIKNYKGIKPDNGGGGGWTADNTVSEANHIGIGNIAAMEINLQANLWRSFLYSNVGLYLPDDLKYTPGNIKLPDNKNTYEYMNGRVTAPGLVDTYVNIGARWSPDVMDNVNPFNHHRNAGLRYRSMLLGNGRFVPFHIQVPQKFFAIRNLLLLPGSYTYEWNFRKDVNMILQSTLGNDLRVDGASVRFDNIALYANFFPMAHNTASTLEAMLRNDTNDQSFNDYLCAANMLYPIPANATSVPISIPSRNWAAFRGWSFTRLKTKETPSLGSGFDPYFVYSGTIPYLDGTFYLNHTFKKVSIMFDSSVSWPGNDRLLTPNEFEIKRSVDGEGYNVAQCNMTKDWFLIQMLSHYNIGYQGFYIPESYKDRMYSFFRNFQPMSRQVVDTTEYKNYKKVTVEFQHNNSGFVGYLGPTMREGQAYPANYPYPLIGQTAVESITQKKFLCDRVMWRIPFSSNFMSMGALTDLGQNMLYANSAHALDMTFEVDPMDEPTLLYVLFEVFDVVRIHQPHRGVIEAVYLRTPFSAGNATT.

Ala-2 is modified (N-acetylalanine; by host). Tyr-907 bears the Phosphotyrosine; by host mark.

This sequence belongs to the adenoviridae hexon protein family. Homotrimer. Interacts with the capsid vertex protein; this interaction binds the peripentonal hexons to the neighboring penton base. Interacts with the hexon-linking protein; this interaction tethers the hexons surrounding the penton to those situated in the central plate of the facet. Interacts with the hexon-interlacing protein; this interaction lashes the hexons together. Interacts with host dyneins DYNC1LI1 and DYNC1I2; this interaction might be involved in intracellular microtubule-dependent transport of incoming viral capsid. Interacts with the shutoff protein; this interaction allows folding and formation of hexons trimers. Interacts with pre-protein VI; this interaction probably allows nuclear import of hexon trimers and possibly pre-capsid assembly.

Its subcellular location is the virion. It is found in the host nucleus. Its function is as follows. Major capsid protein that self-associates to form 240 hexon trimers, each in the shape of a hexagon, building most of the pseudo T=25 capsid. Assembled into trimeric units with the help of the chaperone shutoff protein. Transported by pre-protein VI to the nucleus where it associates with other structural proteins to form an empty capsid. Might be involved, through its interaction with host dyneins, in the intracellular microtubule-dependent transport of incoming viral capsid to the nucleus. The polypeptide is Hexon protein (Human adenovirus A serotype 12 (HAdV-12)).